Consider the following 158-residue polypeptide: Glutathione peroxidase homolog BsaA (158 aa).

Cysteine 36 is an active-site residue.

This sequence belongs to the glutathione peroxidase family.

The protein is Glutathione peroxidase homolog BsaA (bsaA) of Staphylococcus epidermidis (strain ATCC 12228 / FDA PCI 1200).